Consider the following 207-residue polypeptide: N-(5'-phosphoribosyl)anthranilate isomerase (207 aa).

The protein belongs to the TrpF family.

The catalysed reaction is N-(5-phospho-beta-D-ribosyl)anthranilate = 1-(2-carboxyphenylamino)-1-deoxy-D-ribulose 5-phosphate. It functions in the pathway amino-acid biosynthesis; L-tryptophan biosynthesis; L-tryptophan from chorismate: step 3/5. This is N-(5'-phosphoribosyl)anthranilate isomerase from Legionella pneumophila (strain Paris).